A 271-amino-acid chain; its full sequence is Probable redox regulatory protein SCO3349 (271 aa).

2 disordered regions span residues 1-21 and 109-130; these read MPKT…KHIA and AEGT…TRPF. A compositionally biased stretch (basic and acidic residues) spans 7–21; sequence AKDEKSAKKDKKHIA.

The protein belongs to the Rv0495c family.

Its function is as follows. Essential for maintaining intracellular redox homeostasis. The polypeptide is Probable redox regulatory protein SCO3349 (Streptomyces coelicolor (strain ATCC BAA-471 / A3(2) / M145)).